The chain runs to 131 residues: Small ribosomal subunit protein bS6 (131 aa).

Residues V96 to A131 form a disordered region. The span at M103–A117 shows a compositional bias: basic and acidic residues. Residues A118–A131 are compositionally biased toward low complexity.

Belongs to the bacterial ribosomal protein bS6 family.

Its function is as follows. Binds together with bS18 to 16S ribosomal RNA. The polypeptide is Small ribosomal subunit protein bS6 (Methylobacillus flagellatus (strain ATCC 51484 / DSM 6875 / VKM B-1610 / KT)).